A 391-amino-acid chain; its full sequence is Outer membrane protein 41 (391 aa).

The N-terminal stretch at 1–20 is a signal peptide; that stretch reads MKVKYLMLTLVGAIALNASA. Pyrrolidone carboxylic acid is present on Q21. Residues 282 to 391 form the OmpA-like domain; it reads TKTENILTEK…WNRVVIVRSK (110 aa).

The protein belongs to the outer membrane OOP (TC 1.B.6) superfamily. As to quaternary structure, disulfide-linked heterodimer with Omp40.

It is found in the cell outer membrane. Functionally, may have porin activity and function in peptidoglycan binding. This Porphyromonas gingivalis (strain ATCC BAA-308 / W83) protein is Outer membrane protein 41.